Here is a 566-residue protein sequence, read N- to C-terminus: 2-isopropylmalate synthase (566 aa).

A Pyruvate carboxyltransferase domain is found at 32-306 (PLWCAVDLRD…DPQIDFSNID (275 aa)). Asp-41, His-245, His-247, and Asn-281 together coordinate Mg(2+). Residues 451 to 566 (PVRPLERIKQ…VVSAINRASR (116 aa)) form a regulatory domain region.

This sequence belongs to the alpha-IPM synthase/homocitrate synthase family. LeuA type 2 subfamily. In terms of assembly, homodimer. Requires Mg(2+) as cofactor.

The protein localises to the cytoplasm. It carries out the reaction 3-methyl-2-oxobutanoate + acetyl-CoA + H2O = (2S)-2-isopropylmalate + CoA + H(+). It participates in amino-acid biosynthesis; L-leucine biosynthesis; L-leucine from 3-methyl-2-oxobutanoate: step 1/4. Its function is as follows. Catalyzes the condensation of the acetyl group of acetyl-CoA with 3-methyl-2-oxobutanoate (2-ketoisovalerate) to form 3-carboxy-3-hydroxy-4-methylpentanoate (2-isopropylmalate). This chain is 2-isopropylmalate synthase, found in Mycobacterium ulcerans (strain Agy99).